The primary structure comprises 358 residues: Histidinol-phosphate aminotransferase (358 aa).

Lys211 is subject to N6-(pyridoxal phosphate)lysine.

This sequence belongs to the class-II pyridoxal-phosphate-dependent aminotransferase family. Histidinol-phosphate aminotransferase subfamily. Homodimer. Pyridoxal 5'-phosphate serves as cofactor.

The enzyme catalyses L-histidinol phosphate + 2-oxoglutarate = 3-(imidazol-4-yl)-2-oxopropyl phosphate + L-glutamate. The protein operates within amino-acid biosynthesis; L-histidine biosynthesis; L-histidine from 5-phospho-alpha-D-ribose 1-diphosphate: step 7/9. The chain is Histidinol-phosphate aminotransferase from Blochmanniella pennsylvanica (strain BPEN).